The chain runs to 397 residues: MDSLTKSINQFALEFSKKLAESAEGKNIFFSPWGISTSLAMVYLGTRGTTAAQIAQVLQFNRDQDSKFFPESEKKRKMDFNSRKVEEIRSDFQTLISEINNPSNAYVLKTANGIYGEKTYPFHNKYLEDMKTYFGVEPQSVNFLEAPDQTRNEINSWVESQTQGKILNLLPDDAVDSATRMVLVNAIYFKGIWEHQFSARDTREKPFRINKNTSKPVQMMSMKKKLQVFHIENPQAIGLQLYYESRDLSLFLLLPEDVSGLDQLEKAVTYEKLSEWTSADMMELYDVQLHLPKFKLEESYDLKSALSSMGMSDAFNQSKADFSGMSVEGNLFLSNVFHKSFVEINEQGTEASAGTGSEVSLRIRLPSIEFNADHPFLFFIRHNKTNSILFYGRFCSP.

Residues 74 to 77 (KKRK) carry the Nuclear localization signal motif.

The protein belongs to the serpin family. Ov-serpin subfamily.

It is found in the nucleus. The protein resides in the cytoplasm. Functionally, protease inhibitor that may play a role in the regulation of protease activities during hematopoiesis and apoptosis induced by TNF. May regulate protease activities in the cytoplasm and in the nucleus. The protein is Serpin B10 (SERPINB10) of Rhinolophus ferrumequinum (Greater horseshoe bat).